The chain runs to 764 residues: 5-methyltetrahydropteroyltriglutamate--homocysteine methyltransferase (764 aa).

5-methyltetrahydropteroyltri-L-glutamate-binding positions include 16-19 and K121; that span reads RELK. L-homocysteine-binding positions include 440–442 and E493; that span reads IGS. L-methionine-binding positions include 440–442 and E493; that span reads IGS. Residues 524–525 and W570 contribute to the 5-methyltetrahydropteroyltri-L-glutamate site; that span reads RC. D608 contributes to the L-homocysteine binding site. D608 is an L-methionine binding site. E614 is a 5-methyltetrahydropteroyltri-L-glutamate binding site. Zn(2+) contacts are provided by H650, C652, and E674. Catalysis depends on H703, which acts as the Proton donor. Position 735 (C735) interacts with Zn(2+).

The protein belongs to the vitamin-B12 independent methionine synthase family. The cofactor is Zn(2+).

It catalyses the reaction 5-methyltetrahydropteroyltri-L-glutamate + L-homocysteine = tetrahydropteroyltri-L-glutamate + L-methionine. It participates in amino-acid biosynthesis; L-methionine biosynthesis via de novo pathway; L-methionine from L-homocysteine (MetE route): step 1/1. Catalyzes the transfer of a methyl group from 5-methyltetrahydrofolate to homocysteine resulting in methionine formation. The protein is 5-methyltetrahydropteroyltriglutamate--homocysteine methyltransferase of Burkholderia lata (strain ATCC 17760 / DSM 23089 / LMG 22485 / NCIMB 9086 / R18194 / 383).